Here is a 290-residue protein sequence, read N- to C-terminus: 4-hydroxy-tetrahydrodipicolinate synthase (290 aa).

Thr-45 provides a ligand contact to pyruvate. Tyr-133 functions as the Proton donor/acceptor in the catalytic mechanism. The Schiff-base intermediate with substrate role is filled by Lys-161. Pyruvate is bound at residue Ile-203.

This sequence belongs to the DapA family. In terms of assembly, homotetramer; dimer of dimers.

It is found in the cytoplasm. It catalyses the reaction L-aspartate 4-semialdehyde + pyruvate = (2S,4S)-4-hydroxy-2,3,4,5-tetrahydrodipicolinate + H2O + H(+). The protein operates within amino-acid biosynthesis; L-lysine biosynthesis via DAP pathway; (S)-tetrahydrodipicolinate from L-aspartate: step 3/4. Functionally, catalyzes the condensation of (S)-aspartate-beta-semialdehyde [(S)-ASA] and pyruvate to 4-hydroxy-tetrahydrodipicolinate (HTPA). This Cellvibrio japonicus (strain Ueda107) (Pseudomonas fluorescens subsp. cellulosa) protein is 4-hydroxy-tetrahydrodipicolinate synthase.